We begin with the raw amino-acid sequence, 747 residues long: Putative ankyrin repeat protein FPV222 (747 aa).

14 ANK repeats span residues 38–67 (DNCT…DPNI), 103–132 (NYRN…LVNM), 136–165 (KNIT…NTNA), 169–198 (YGET…NVNV), 202–231 (DSIT…DTNA), 234–263 (LERF…NTNV), 294–323 (PCTV…NPDI), 328–357 (TSTY…YTDV), 361–393 (QQNT…SFNL), 397–426 (KGRT…DTNI), 430–460 (MSFT…DPNL), 464–493 (KEVS…DIKP), 495–524 (NECY…ELEV), and 529–559 (DHYV…DLNK).

The sequence is that of Putative ankyrin repeat protein FPV222 from Vertebrata (FPV).